Reading from the N-terminus, the 1553-residue chain is Sterol 3-beta-glucosyltransferase (1553 aa).

Composition is skewed to polar residues over residues 1-10 and 25-36; these read MASSQPTSSG and LNTETSSSQHRA. Disordered regions lie at residues 1 to 106 and 189 to 270; these read MASS…NEED and PASA…GLAP. A compositionally biased stretch (basic and acidic residues) spans 90–100; it reads LPDRLKDNGKE. The span at 211-222 shows a compositional bias: low complexity; it reads LLQSVPSLSRLS. Over residues 223 to 232 the composition is skewed to basic residues; sequence SSHKSKKTKQ. GRAM domains are found at residues 323–370 and 464–495; these read KKLK…HLPK and SLQRVIFRSHNDGDSVKISIPIRNILDIEEAQ. The PH domain maps to 374–470; sequence EIAKSGYLSK…WVKSLQRVIF (97 aa). 3 disordered regions span residues 542 to 569, 611 to 662, and 805 to 825; these read SPEDSGANDAPKGTGGDRAIGDNLGSPR, FSRR…FDDP, and GKKHYDHPAGRRTEREDVEDD. Positions 633–650 are enriched in basic and acidic residues; that stretch reads LHGDGRRSFSKPRHEPHA. Residues 651–662 are compositionally biased toward polar residues; that stretch reads STDSYAQSFDDP. Residues 810–819 show a composition bias toward basic and acidic residues; that stretch reads DHPAGRRTER. The region spanning 834–900 is the GRAM 3 domain; the sequence is ARFQAHFALP…KDIETVDKEK (67 aa). Positions 1020, 1021, 1023, 1328, 1330, 1343, 1346, 1347, 1348, 1367, and 1368 each coordinate UDP-alpha-D-glucose. 2 disordered regions span residues 1446 to 1504 and 1527 to 1553; these read KHQS…GSMS and PALGSRVLSSPPTSPGAMRGAGGVKYV. Acidic residues predominate over residues 1466–1488; sequence PEDDQGQAAEEDDIDADDEEEES.

Belongs to the glycosyltransferase 28 family.

It localises to the cytoplasm. The protein resides in the preautophagosomal structure membrane. The catalysed reaction is a sterol + UDP-alpha-D-glucose = a sterol 3-beta-D-glucoside + UDP + H(+). It catalyses the reaction ergosterol + UDP-alpha-D-glucose = ergosteryl 3-beta-D-glucoside + UDP + H(+). Sterol glycosyltransferase responsible for the glycosylation of ergosterol to form ergosterol-glucoside. The polypeptide is Sterol 3-beta-glucosyltransferase (apg-12) (Neurospora crassa (strain ATCC 24698 / 74-OR23-1A / CBS 708.71 / DSM 1257 / FGSC 987)).